The chain runs to 502 residues: Transmembrane prolyl 4-hydroxylase (502 aa).

Positions 1–29 (MAAAAVTGQRPETAAAEEASRPQWAPPDH) are disordered. The Cytoplasmic segment spans residues 1 to 60 (MAAAAVTGQRPETAAAEEASRPQWAPPDHCQAQAAAGLGDGEDAPVRPLCKPRGICSRAY). Residues 61-81 (FLVLMVFVHLYLGNVLALLLF) form a helical; Signal-anchor for type II membrane protein membrane-spanning segment. Topologically, residues 82 to 502 (VHYSNGDESS…RAYRDARVEL (421 aa)) are lumenal. The disordered stretch occupies residues 89–111 (ESSDPGPQHRAQGPGPEPTLGPL). 2 EF-hand domains span residues 185 to 220 (TMQV…GNGW) and 224 to 259 (PESI…DFHK). Ca(2+) is bound by residues aspartate 198, asparagine 200, aspartate 202, histidine 204, glutamate 209, aspartate 237, aspartate 239, aspartate 241, and glutamate 248. The Fe2OG dioxygenase domain occupies 310–460 (LSEPLQVVRY…KWIANNWINV (151 aa)). Residues histidine 328 and aspartate 330 each coordinate Fe cation. N-linked (GlcNAc...) asparagine glycans are attached at residues asparagine 348 and asparagine 368. Glutamate 374 is a Fe cation binding site. N-linked (GlcNAc...) asparagine glycosylation occurs at asparagine 382. Residue lysine 451 participates in 2-oxoglutarate binding.

Homodimer. It depends on Fe(2+) as a cofactor. Requires L-ascorbate as cofactor. In terms of processing, glycosylated. Widely expressed with highest levels in adult pancreas, heart, skeletal muscle, brain, placenta, kidney and adrenal gland. Expressed at lower levels in epiphyseal cartilage and in fibroblasts.

The protein resides in the endoplasmic reticulum membrane. It catalyses the reaction L-prolyl-[hypoxia-inducible factor alpha subunit] + 2-oxoglutarate + O2 = trans-4-hydroxy-L-prolyl-[hypoxia-inducible factor alpha subunit] + succinate + CO2. Its function is as follows. Catalyzes the post-translational formation of 4-hydroxyproline in hypoxia-inducible factor (HIF) alpha proteins. Hydroxylates HIF1A at 'Pro-402' and 'Pro-564'. May function as a cellular oxygen sensor and, under normoxic conditions, may target HIF through the hydroxylation for proteasomal degradation via the von Hippel-Lindau ubiquitination complex. The protein is Transmembrane prolyl 4-hydroxylase (P4HTM) of Homo sapiens (Human).